A 361-amino-acid chain; its full sequence is Cytochrome P450 family protein EryCII (361 aa).

This sequence belongs to the cytochrome P450 family. Heterotetramer composed of EryCII and EryCIII.

The protein operates within antibiotic biosynthesis; erythromycin biosynthesis. Functionally, involved in the erythromycin biosynthesis pathway. Acts by forming a complex and stabilizing the desosaminyl transferase EryCIII. The polypeptide is Cytochrome P450 family protein EryCII (eryCII) (Saccharopolyspora erythraea (strain ATCC 11635 / DSM 40517 / JCM 4748 / NBRC 13426 / NCIMB 8594 / NRRL 2338)).